We begin with the raw amino-acid sequence, 124 residues long: Holo-[acyl-carrier-protein] synthase (124 aa).

The Mg(2+) site is built by Asp8 and Glu56.

Belongs to the P-Pant transferase superfamily. AcpS family. Mg(2+) serves as cofactor.

The protein resides in the cytoplasm. The catalysed reaction is apo-[ACP] + CoA = holo-[ACP] + adenosine 3',5'-bisphosphate + H(+). In terms of biological role, transfers the 4'-phosphopantetheine moiety from coenzyme A to a Ser of acyl-carrier-protein. The sequence is that of Holo-[acyl-carrier-protein] synthase from Nitratidesulfovibrio vulgaris (strain ATCC 29579 / DSM 644 / CCUG 34227 / NCIMB 8303 / VKM B-1760 / Hildenborough) (Desulfovibrio vulgaris).